Reading from the N-terminus, the 342-residue chain is Sideroflexin-5 (342 aa).

Residues 1–24 are compositionally biased toward low complexity; it reads MADTATTASAASAAASASNASSDA. The disordered stretch occupies residues 1 to 29; it reads MADTATTASAASAAASASNASSDAPPFQL. 4 consecutive transmembrane segments (helical) span residues 105–125, 165–185, 256–276, and 289–309; these read IFMP…VVGL, FIQG…GLNV, LTRV…MSML, and LLPV…PLAI.

The protein belongs to the sideroflexin family. Specifically expressed in the brain.

The protein localises to the mitochondrion inner membrane. It catalyses the reaction citrate(in) = citrate(out). Its function is as follows. Mitochondrial amino-acid transporter. Transports citrate. Does not act as a serine transporter: not able to mediate transport of serine into mitochondria. In brown adipose tissue, plays a role in the regulation of UCP1-dependent thermogenesis probably by supporting mitochondrial glycerol-3-phosphate utilization. The sequence is that of Sideroflexin-5 from Rattus norvegicus (Rat).